The sequence spans 162 residues: Haemaphysalin (162 aa).

A signal peptide spans 1–17 (MHLPATIVFFTCTGVFS). A glycan (N-linked (GlcNAc...) asparagine) is linked at asparagine 57. In terms of domain architecture, BPTI/Kunitz inhibitor spans 90–145 (CLQPPETGIFDIGWSTYYVYNSRKNMCKPVKKMKFRKTTSKQKNLFNSEEECQQEC). Disulfide bonds link cysteine 90–cysteine 145 and cysteine 116–cysteine 141.

Interacts with host coagulation factor XII (F12) (inactive and activated) (via fibronectin type II domain). Interacts with host high molecular weight kininogen (KNG1) (via amino acids 421-466 and 459-513). Salivary gland.

It is found in the secreted. With respect to regulation, zn(2+) modulates binding to host coagulation factor XII (F12) and high molecular weight kininogen (KNG1). Functionally, anticoagulant protein. Inhibits activation of host plasma kallikrein-kinin system by interfering with reciprocal activation between coagulation factor XII (F12) and prekallikrein (KLKB1) without affecting their amidolytic activities. The protein is Haemaphysalin of Haemaphysalis longicornis (Bush tick).